The chain runs to 190 residues: Heme-binding protein 1 (190 aa).

The protein belongs to the HEBP family. In terms of assembly, monomer.

Its subcellular location is the cytoplasm. May bind free porphyrinogens that may be present in the cell and thus facilitate removal of these potentially toxic compound. Binds with a high affinity to one molecule of heme or porphyrins. It binds metalloporphyrins, free porphyrins and N-methylprotoporphyrin with similar affinities. The polypeptide is Heme-binding protein 1 (hebp1) (Xenopus laevis (African clawed frog)).